A 202-amino-acid polypeptide reads, in one-letter code: MTPLGRLHLLRVLSTPPVFLLGLLLALPLGAQGLSGVRFSASRTAHQPPQKHLTHGLLKPAAHLVGYPSKQNSLLWRANTDRAFLRHGFSLNNNSLLIPTSGLYFVYSQVVFSGESCSPRAIPTPIYLAHEVQLFSSQYPFHVPLLSAQKSVYPGLQGPWVRSMYQGAVFLLSKGDQLSTHTDGISHLHFSPSTVFFGAFAL.

A signal peptide spans 1 to 33 (MTPLGRLHLLRVLSTPPVFLLGLLLALPLGAQG). Residues 60–202 (PAAHLVGYPS…STVFFGAFAL (143 aa)) form the THD domain. The N-linked (GlcNAc...) asparagine glycan is linked to Asn-93.

This sequence belongs to the tumor necrosis factor family. Homotrimer, and heterotrimer of either two LTB and one LTA subunits or (less prevalent) two LTA and one LTB subunits. Interacts with TNFRSF14.

The protein localises to the secreted. It localises to the membrane. Cytokine that in its homotrimeric form binds to TNFRSF1A/TNFR1, TNFRSF1B/TNFBR and TNFRSF14/HVEM. In its heterotrimeric form with LTB binds to TNFRSF3/LTBR. Lymphotoxin is produced by lymphocytes and is cytotoxic for a wide range of tumor cells in vitro and in vivo. The polypeptide is Lymphotoxin-alpha (Lta) (Rattus norvegicus (Rat)).